A 465-amino-acid chain; its full sequence is RuvB-like helicase 2 (465 aa).

72 to 79 (GPPSTGKT) is a binding site for ATP.

The protein belongs to the RuvB family. In terms of assembly, may form heterododecamers with RVB1. Component of the SWR1 chromatin remodeling complex, the INO80 chromatin remodeling complex, and of the R2TP complex. Interacts with dil1.

Its subcellular location is the nucleus. It catalyses the reaction ATP + H2O = ADP + phosphate + H(+). Functionally, DNA helicase which participates in several chromatin remodeling complexes, including the SWR1 and the INO80 complexes. The SWR1 complex mediates the ATP-dependent exchange of histone H2A for the H2A variant HZT1 leading to transcriptional regulation of selected genes by chromatin remodeling. The INO80 complex remodels chromatin by shifting nucleosomes and is involved in DNA repair. Also involved in pre-rRNA processing. The polypeptide is RuvB-like helicase 2 (rvb2) (Schizosaccharomyces pombe (strain 972 / ATCC 24843) (Fission yeast)).